A 215-amino-acid polypeptide reads, in one-letter code: NAD(P)H-hydrate epimerase (215 aa).

A YjeF N-terminal domain is found at 10–212; that stretch reads SRELDDKTIN…DIGIYRGNAF (203 aa). 59-63 contacts (6S)-NADPHX; sequence NNGGD. Positions 60 and 122 each coordinate K(+). Residues 126-132 and Asp155 each bind (6S)-NADPHX; that span reads GSGLSRN. Ser158 lines the K(+) pocket.

It belongs to the NnrE/AIBP family. It depends on K(+) as a cofactor.

The enzyme catalyses (6R)-NADHX = (6S)-NADHX. The catalysed reaction is (6R)-NADPHX = (6S)-NADPHX. Its function is as follows. Catalyzes the epimerization of the S- and R-forms of NAD(P)HX, a damaged form of NAD(P)H that is a result of enzymatic or heat-dependent hydration. This is a prerequisite for the S-specific NAD(P)H-hydrate dehydratase to allow the repair of both epimers of NAD(P)HX. The polypeptide is NAD(P)H-hydrate epimerase (Lentilactobacillus buchneri (strain NRRL B-30929) (Lactobacillus buchneri)).